Consider the following 154-residue polypeptide: 3-hydroxyacyl-[acyl-carrier-protein] dehydratase FabZ (154 aa).

His-57 is an active-site residue.

The protein belongs to the thioester dehydratase family. FabZ subfamily.

Its subcellular location is the cytoplasm. It catalyses the reaction a (3R)-hydroxyacyl-[ACP] = a (2E)-enoyl-[ACP] + H2O. Its function is as follows. Involved in unsaturated fatty acids biosynthesis. Catalyzes the dehydration of short chain beta-hydroxyacyl-ACPs and long chain saturated and unsaturated beta-hydroxyacyl-ACPs. In Sinorhizobium medicae (strain WSM419) (Ensifer medicae), this protein is 3-hydroxyacyl-[acyl-carrier-protein] dehydratase FabZ.